We begin with the raw amino-acid sequence, 477 residues long: 23S rRNA (uracil(1939)-C(5))-methyltransferase RlmD (477 aa).

In terms of domain architecture, TRAM spans 7 to 66 (KTENFPPDWLLVESLDLEAQGVAHRADGKVVFIKGALPFELVSANVHRKKNNWEQGVVTA). The [4Fe-4S] cluster site is built by cysteine 79, cysteine 89, cysteine 92, and cysteine 171. S-adenosyl-L-methionine is bound by residues glutamine 280, phenylalanine 309, asparagine 314, glutamate 330, asparagine 365, and aspartate 386. The Nucleophile role is filled by cysteine 432.

Belongs to the class I-like SAM-binding methyltransferase superfamily. RNA M5U methyltransferase family. RlmD subfamily.

It carries out the reaction uridine(1939) in 23S rRNA + S-adenosyl-L-methionine = 5-methyluridine(1939) in 23S rRNA + S-adenosyl-L-homocysteine + H(+). Its function is as follows. Catalyzes the formation of 5-methyl-uridine at position 1939 (m5U1939) in 23S rRNA. The protein is 23S rRNA (uracil(1939)-C(5))-methyltransferase RlmD of Albidiferax ferrireducens (strain ATCC BAA-621 / DSM 15236 / T118) (Rhodoferax ferrireducens).